The sequence spans 303 residues: Coenzyme PQQ synthesis protein B (303 aa).

Belongs to the PqqB family.

Its pathway is cofactor biosynthesis; pyrroloquinoline quinone biosynthesis. Its function is as follows. May be involved in the transport of PQQ or its precursor to the periplasm. This chain is Coenzyme PQQ synthesis protein B, found in Pseudomonas putida (strain ATCC 700007 / DSM 6899 / JCM 31910 / BCRC 17059 / LMG 24140 / F1).